We begin with the raw amino-acid sequence, 422 residues long: Phospho-N-acetylmuramoyl-pentapeptide-transferase (422 aa).

9 consecutive transmembrane segments (helical) span residues L28–L48, V71–L91, L95–F115, I136–V156, A211–A231, G239–S259, L279–Y299, I313–L333, and K399–L419.

This sequence belongs to the glycosyltransferase 4 family. MraY subfamily. Mg(2+) serves as cofactor.

Its subcellular location is the cell inner membrane. It carries out the reaction UDP-N-acetyl-alpha-D-muramoyl-L-alanyl-gamma-D-glutamyl-meso-2,6-diaminopimeloyl-D-alanyl-D-alanine + di-trans,octa-cis-undecaprenyl phosphate = di-trans,octa-cis-undecaprenyl diphospho-N-acetyl-alpha-D-muramoyl-L-alanyl-D-glutamyl-meso-2,6-diaminopimeloyl-D-alanyl-D-alanine + UMP. It participates in cell wall biogenesis; peptidoglycan biosynthesis. In terms of biological role, catalyzes the initial step of the lipid cycle reactions in the biosynthesis of the cell wall peptidoglycan: transfers peptidoglycan precursor phospho-MurNAc-pentapeptide from UDP-MurNAc-pentapeptide onto the lipid carrier undecaprenyl phosphate, yielding undecaprenyl-pyrophosphoryl-MurNAc-pentapeptide, known as lipid I. The chain is Phospho-N-acetylmuramoyl-pentapeptide-transferase from Bacteroides thetaiotaomicron (strain ATCC 29148 / DSM 2079 / JCM 5827 / CCUG 10774 / NCTC 10582 / VPI-5482 / E50).